Reading from the N-terminus, the 237-residue chain is Ribonuclease PH (237 aa).

Phosphate-binding positions include Arg-86 and 124 to 126 (GTR).

This sequence belongs to the RNase PH family. In terms of assembly, homohexameric ring arranged as a trimer of dimers.

It catalyses the reaction tRNA(n+1) + phosphate = tRNA(n) + a ribonucleoside 5'-diphosphate. In terms of biological role, phosphorolytic 3'-5' exoribonuclease that plays an important role in tRNA 3'-end maturation. Removes nucleotide residues following the 3'-CCA terminus of tRNAs; can also add nucleotides to the ends of RNA molecules by using nucleoside diphosphates as substrates, but this may not be physiologically important. Probably plays a role in initiation of 16S rRNA degradation (leading to ribosome degradation) during starvation. This is Ribonuclease PH from Nitrobacter hamburgensis (strain DSM 10229 / NCIMB 13809 / X14).